Here is a 493-residue protein sequence, read N- to C-terminus: Cysteine--tRNA ligase (493 aa).

Cys-29 lines the Zn(2+) pocket. The short motif at 31-41 (VTVYDLCHLGH) is the 'HIGH' region element. 3 residues coordinate Zn(2+): Cys-213, His-238, and Glu-242. The 'KMSKS' region motif lies at 270 to 274 (KMSKS). ATP is bound at residue Lys-273.

The protein belongs to the class-I aminoacyl-tRNA synthetase family. Monomer. It depends on Zn(2+) as a cofactor.

Its subcellular location is the cytoplasm. It carries out the reaction tRNA(Cys) + L-cysteine + ATP = L-cysteinyl-tRNA(Cys) + AMP + diphosphate. The polypeptide is Cysteine--tRNA ligase (Parasynechococcus marenigrum (strain WH8102)).